A 327-amino-acid polypeptide reads, in one-letter code: 2-keto-3-deoxygluconate permease (327 aa).

A run of 10 helical transmembrane segments spans residues 10-30 (IPGG…TFSP), 42-62 (GMIT…GASI), 73-93 (KSGT…AIAS), 95-115 (IIPE…LALV), 139-159 (AGAF…IILG), 163-183 (IASF…VGFA), 199-219 (VQTL…LTVI), 224-244 (LLGI…LIIA), 254-274 (TAGI…VLIA), and 289-309 (SLVA…TSIW).

The protein belongs to the KdgT transporter family.

It is found in the cell inner membrane. It carries out the reaction 2-dehydro-3-deoxy-D-gluconate(in) + H(+)(in) = 2-dehydro-3-deoxy-D-gluconate(out) + H(+)(out). In terms of biological role, catalyzes the proton-dependent uptake of 2-keto-3-deoxygluconate (KDG) into the cell. The chain is 2-keto-3-deoxygluconate permease from Escherichia coli O127:H6 (strain E2348/69 / EPEC).